We begin with the raw amino-acid sequence, 411 residues long: Secretion apparatus protein BsaZ (411 aa).

A run of 4 helical transmembrane segments spans residues 28–48, 80–100, 137–157, and 175–195; these read IVALIVIATGALAAPALVDLT, IAAPFVLLCAAAGALPSLVQS, ALLYVGVFALTVRVFADLYHA, and IVLTVRLVLLFLLCALPVLIL. Residues 341 to 411 form a disordered region; that stretch reads AANRGGPPPE…APARTGDQNA (71 aa). Residues 370–404 show a composition bias toward low complexity; it reads DACADNAFPDDAPPGAAAPNAGSPDGPAPDGGAPA.

It belongs to the type III secretion exporter family.

The protein resides in the cell membrane. Part of the bsa type III secretion system, is involved in the intracellular replication of invading bacteria inside the host cell. Probably necessary for the lysis of the vacuole membrane and escape into the host cell cytoplasm. The polypeptide is Secretion apparatus protein BsaZ (bsaZ) (Burkholderia pseudomallei (strain K96243)).